The sequence spans 637 residues: Pentatricopeptide repeat-containing protein At1g12300, mitochondrial (637 aa).

The N-terminal 95 residues, 1–95 (MVKLMIRRLS…PTVIDFSRLF (95 aa)), are a transit peptide targeting the mitochondrion. PPR repeat units lie at residues 87–121 (TVID…GIAH), 122–156 (NLYT…GYEP), 157–191 (NTIT…GHKP), 192–226 (DLIT…GCQP), 227–261 (NAVT…NIKL), 262–296 (DAVK…GITT), 297–331 (NIIT…KINP), 332–366 (NVVT…GIAP), 367–401 (DTIT…GCDP), 402–436 (NIRT…GVVA), 437–471 (DTVT…KVPP), 472–506 (NIVT…KMEL), 507–541 (DIGI…GVKP), 542–576 (GVKT…GHAP), and 577–611 (DGWT…GFSV).

It belongs to the PPR family. P subfamily.

It is found in the mitochondrion. The protein is Pentatricopeptide repeat-containing protein At1g12300, mitochondrial of Arabidopsis thaliana (Mouse-ear cress).